Here is a 170-residue protein sequence, read N- to C-terminus: Protein-export protein SecB (170 aa).

The protein belongs to the SecB family. In terms of assembly, homotetramer, a dimer of dimers. One homotetramer interacts with 1 SecA dimer.

The protein localises to the cytoplasm. In terms of biological role, one of the proteins required for the normal export of preproteins out of the cell cytoplasm. It is a molecular chaperone that binds to a subset of precursor proteins, maintaining them in a translocation-competent state. It also specifically binds to its receptor SecA. The protein is Protein-export protein SecB of Pasteurella multocida (strain Pm70).